The chain runs to 483 residues: Glutamyl-tRNA(Gln) amidotransferase subunit A (483 aa).

Residues Lys76 and Ser151 each act as charge relay system in the active site. The Acyl-ester intermediate role is filled by Ser175.

It belongs to the amidase family. GatA subfamily. In terms of assembly, heterotrimer of A, B and C subunits.

The catalysed reaction is L-glutamyl-tRNA(Gln) + L-glutamine + ATP + H2O = L-glutaminyl-tRNA(Gln) + L-glutamate + ADP + phosphate + H(+). In terms of biological role, allows the formation of correctly charged Gln-tRNA(Gln) through the transamidation of misacylated Glu-tRNA(Gln) in organisms which lack glutaminyl-tRNA synthetase. The reaction takes place in the presence of glutamine and ATP through an activated gamma-phospho-Glu-tRNA(Gln). This is Glutamyl-tRNA(Gln) amidotransferase subunit A from Pseudomonas savastanoi pv. phaseolicola (strain 1448A / Race 6) (Pseudomonas syringae pv. phaseolicola (strain 1448A / Race 6)).